Reading from the N-terminus, the 79-residue chain is MGGISIWQLLIIALIVVLLFGTKKLRSLGGDLGGAVKGFKNAMSSEEDKKALEDTEAAKTAQTTQQATEKKPESNKEQA.

Residues 1–21 traverse the membrane as a helical segment; sequence MGGISIWQLLIIALIVVLLFG. Positions 43–79 are disordered; that stretch reads MSSEEDKKALEDTEAAKTAQTTQQATEKKPESNKEQA. Basic and acidic residues predominate over residues 46 to 57; that stretch reads EEDKKALEDTEA. Low complexity predominate over residues 58 to 67; the sequence is AKTAQTTQQA. The span at 68–79 shows a compositional bias: basic and acidic residues; the sequence is TEKKPESNKEQA.

Belongs to the TatA/E family. In terms of assembly, the Tat system comprises two distinct complexes: a TatABC complex, containing multiple copies of TatA, TatB and TatC subunits, and a separate TatA complex, containing only TatA subunits. Substrates initially bind to the TatABC complex, which probably triggers association of the separate TatA complex to form the active translocon.

Its subcellular location is the cell inner membrane. Functionally, part of the twin-arginine translocation (Tat) system that transports large folded proteins containing a characteristic twin-arginine motif in their signal peptide across membranes. TatA could form the protein-conducting channel of the Tat system. This chain is Sec-independent protein translocase protein TatA, found in Shewanella putrefaciens (strain CN-32 / ATCC BAA-453).